The following is a 121-amino-acid chain: Large ribosomal subunit protein uL3 (121 aa).

Gln62 bears the N5-methylglutamine mark.

It belongs to the universal ribosomal protein uL3 family. Part of the 50S ribosomal subunit. Forms a cluster with proteins L14 and L19. Methylated by PrmB.

One of the primary rRNA binding proteins, it binds directly near the 3'-end of the 23S rRNA, where it nucleates assembly of the 50S subunit. The polypeptide is Large ribosomal subunit protein uL3 (rplC) (Aggregatibacter actinomycetemcomitans (Actinobacillus actinomycetemcomitans)).